A 568-amino-acid chain; its full sequence is Sulfite reductase [NADPH] hemoprotein beta-component (568 aa).

Positions 426, 432, 471, and 475 each coordinate [4Fe-4S] cluster. Residue C475 coordinates siroheme.

Belongs to the nitrite and sulfite reductase 4Fe-4S domain family. In terms of assembly, alpha(8)-beta(8). The alpha component is a flavoprotein, the beta component is a hemoprotein. Requires siroheme as cofactor. [4Fe-4S] cluster serves as cofactor.

It catalyses the reaction hydrogen sulfide + 3 NADP(+) + 3 H2O = sulfite + 3 NADPH + 4 H(+). It functions in the pathway sulfur metabolism; hydrogen sulfide biosynthesis; hydrogen sulfide from sulfite (NADPH route): step 1/1. Its function is as follows. Component of the sulfite reductase complex that catalyzes the 6-electron reduction of sulfite to sulfide. This is one of several activities required for the biosynthesis of L-cysteine from sulfate. This chain is Sulfite reductase [NADPH] hemoprotein beta-component, found in Xylella fastidiosa (strain M23).